The chain runs to 389 residues: Formate-dependent phosphoribosylglycinamide formyltransferase (389 aa).

Residues 15 to 16 (EL) and E75 each bind N(1)-(5-phospho-beta-D-ribosyl)glycinamide. ATP contacts are provided by residues R107, K148, 153–158 (SSGKGQ), 188–191 (EEFL), and E196. One can recognise an ATP-grasp domain in the interval 112–302 (DLAAGELALR…EFELHLRAVL (191 aa)). 2 residues coordinate Mg(2+): E261 and E273. Residues D280, K350, and 357–358 (RR) each bind N(1)-(5-phospho-beta-D-ribosyl)glycinamide.

This sequence belongs to the PurK/PurT family. As to quaternary structure, homodimer.

It carries out the reaction N(1)-(5-phospho-beta-D-ribosyl)glycinamide + formate + ATP = N(2)-formyl-N(1)-(5-phospho-beta-D-ribosyl)glycinamide + ADP + phosphate + H(+). It participates in purine metabolism; IMP biosynthesis via de novo pathway; N(2)-formyl-N(1)-(5-phospho-D-ribosyl)glycinamide from N(1)-(5-phospho-D-ribosyl)glycinamide (formate route): step 1/1. Functionally, involved in the de novo purine biosynthesis. Catalyzes the transfer of formate to 5-phospho-ribosyl-glycinamide (GAR), producing 5-phospho-ribosyl-N-formylglycinamide (FGAR). Formate is provided by PurU via hydrolysis of 10-formyl-tetrahydrofolate. This chain is Formate-dependent phosphoribosylglycinamide formyltransferase, found in Synechococcus sp. (strain WH7803).